The chain runs to 255 residues: Hydroxyacylglutathione hydrolase (255 aa).

Residues His53, His55, Asp57, His58, His110, Asp127, and His165 each contribute to the Zn(2+) site.

This sequence belongs to the metallo-beta-lactamase superfamily. Glyoxalase II family. As to quaternary structure, monomer. Zn(2+) serves as cofactor.

It catalyses the reaction an S-(2-hydroxyacyl)glutathione + H2O = a 2-hydroxy carboxylate + glutathione + H(+). It participates in secondary metabolite metabolism; methylglyoxal degradation; (R)-lactate from methylglyoxal: step 2/2. Thiolesterase that catalyzes the hydrolysis of S-D-lactoyl-glutathione to form glutathione and D-lactic acid. The sequence is that of Hydroxyacylglutathione hydrolase from Xanthomonas campestris pv. campestris (strain 8004).